Reading from the N-terminus, the 84-residue chain is Large ribosomal subunit protein bL27 (84 aa).

Residues 1 to 24 (MAHKKAGGSSRNGRDSKGQRLGCK) are disordered.

It belongs to the bacterial ribosomal protein bL27 family.

This Pelobacter propionicus (strain DSM 2379 / NBRC 103807 / OttBd1) protein is Large ribosomal subunit protein bL27.